The primary structure comprises 303 residues: Probable cell division protein WhiA (303 aa).

A DNA-binding region (H-T-H motif) is located at residues 272–303 (SLQQIADSLDFAITKSGVNHRLRKINKLAEDL).

This sequence belongs to the WhiA family.

In terms of biological role, involved in cell division and chromosome segregation. This Streptococcus equi subsp. zooepidemicus (strain MGCS10565) protein is Probable cell division protein WhiA.